The following is a 142-amino-acid chain: Large ribosomal subunit protein uL13 (142 aa).

It belongs to the universal ribosomal protein uL13 family. In terms of assembly, part of the 50S ribosomal subunit.

Functionally, this protein is one of the early assembly proteins of the 50S ribosomal subunit, although it is not seen to bind rRNA by itself. It is important during the early stages of 50S assembly. This Salmonella agona (strain SL483) protein is Large ribosomal subunit protein uL13.